The primary structure comprises 418 residues: 3-phosphoshikimate 1-carboxyvinyltransferase (418 aa).

3-phosphoshikimate is bound by residues K26, S27, and R31. K26 lines the phosphoenolpyruvate pocket. Residues G97 and R125 each coordinate phosphoenolpyruvate. Residues S170, S171, Q172, D297, N320, and K324 each contribute to the 3-phosphoshikimate site. Q172 is a binding site for phosphoenolpyruvate. Residue D297 is the Proton acceptor of the active site. 3 residues coordinate phosphoenolpyruvate: R328, R375, and K400.

Belongs to the EPSP synthase family. Monomer.

Its subcellular location is the cytoplasm. The catalysed reaction is 3-phosphoshikimate + phosphoenolpyruvate = 5-O-(1-carboxyvinyl)-3-phosphoshikimate + phosphate. Its pathway is metabolic intermediate biosynthesis; chorismate biosynthesis; chorismate from D-erythrose 4-phosphate and phosphoenolpyruvate: step 6/7. Its function is as follows. Catalyzes the transfer of the enolpyruvyl moiety of phosphoenolpyruvate (PEP) to the 5-hydroxyl of shikimate-3-phosphate (S3P) to produce enolpyruvyl shikimate-3-phosphate and inorganic phosphate. This Pseudomonas syringae pv. syringae (strain B728a) protein is 3-phosphoshikimate 1-carboxyvinyltransferase.